A 157-amino-acid chain; its full sequence is Cyclic pyranopterin monophosphate synthase (157 aa).

Residues 74–76 (MCH) and 112–113 (ME) contribute to the substrate site. The active site involves Asp-127.

It belongs to the MoaC family. Homohexamer; trimer of dimers.

The catalysed reaction is (8S)-3',8-cyclo-7,8-dihydroguanosine 5'-triphosphate = cyclic pyranopterin phosphate + diphosphate. It functions in the pathway cofactor biosynthesis; molybdopterin biosynthesis. Catalyzes the conversion of (8S)-3',8-cyclo-7,8-dihydroguanosine 5'-triphosphate to cyclic pyranopterin monophosphate (cPMP). In Campylobacter jejuni subsp. jejuni serotype O:2 (strain ATCC 700819 / NCTC 11168), this protein is Cyclic pyranopterin monophosphate synthase.